The following is a 130-amino-acid chain: Small ribosomal subunit protein uS9 (130 aa).

The interval 109 to 130 is disordered; the sequence is RMKERKKYGLKGARRAPQFSKR. Positions 111–130 are enriched in basic residues; the sequence is KERKKYGLKGARRAPQFSKR.

The protein belongs to the universal ribosomal protein uS9 family.

This is Small ribosomal subunit protein uS9 from Alkaliphilus metalliredigens (strain QYMF).